Reading from the N-terminus, the 395-residue chain is Cyclin-A2 (395 aa).

The segment at 1-93 (MLAEQENQEN…EEAADAPGLR (93 aa)) is disordered. Positions 27-60 (ALGLLRGGPARPGPAAQAARNGEGRGAAAGQQQQ) are enriched in low complexity.

Belongs to the cyclin family. Cyclin AB subfamily. In terms of assembly, interacts with the CDK1 and CDK2 protein kinases to form serine/threonine kinase holoenzyme complexes.

It is found in the nucleus. Its subcellular location is the cytoplasm. Cyclin which controls both the G1/S and the G2/M transition phases of the cell cycle. Functions through the formation of specific serine/threonine kinase holoenzyme complexes with the cyclin-dependent protein kinases CDK1 and CDK2. The cyclin subunit confers the substrate specificity of these complexes and differentially interacts with and activates CDK1 and CDK2 throughout the cell cycle. The sequence is that of Cyclin-A2 from Gallus gallus (Chicken).